Consider the following 489-residue polypeptide: UDP-N-acetylmuramate--L-alanine ligase (489 aa).

Position 128 to 134 (128 to 134 (GTHGKTT)) interacts with ATP.

Belongs to the MurCDEF family.

It is found in the cytoplasm. It carries out the reaction UDP-N-acetyl-alpha-D-muramate + L-alanine + ATP = UDP-N-acetyl-alpha-D-muramoyl-L-alanine + ADP + phosphate + H(+). The protein operates within cell wall biogenesis; peptidoglycan biosynthesis. In terms of biological role, cell wall formation. In Shewanella sediminis (strain HAW-EB3), this protein is UDP-N-acetylmuramate--L-alanine ligase.